Here is a 2590-residue protein sequence, read N- to C-terminus: DNA polymerase theta (2590 aa).

The span at 1 to 12 shows a compositional bias: basic residues; the sequence is MNLLRRSGKRRR. Positions 1-33 are disordered; the sequence is MNLLRRSGKRRRSESGSDSFSGSGGDSSASPQF. Positions 16–30 are enriched in low complexity; the sequence is GSDSFSGSGGDSSAS. Residues Gln96 and 115–122 each bind ATP; that span reads APTSAGKT. The Helicase ATP-binding domain occupies 102–286; it reads LGQVLEGKNL…WLNAELYHTD (185 aa). The interval 102–554 is helicase activity; that stretch reads LGQVLEGKNL…STSQDMHTYA (453 aa). Residues 216-219 carry the DEAH box motif; sequence DELH. Residues 321–554 form the Helicase C-terminal domain; that stretch reads GDEDHVVSLC…STSQDMHTYA (234 aa). Residues 847-894 form an interaction with RAD51 region; that stretch reads DEEEEAVEERRNMRTIWVTGRKGLTEREAAALIVEEARMILQQDLVEM. At Lys990 the chain carries N6-acetyllysine. Residues 1034–1060 are disordered; it reads KMSRSFRSWKRRKHLKRSRDSSPLKDS. The segment covering 1040–1050 has biased composition (basic residues); that stretch reads RSWKRRKHLKR. 7 positions are modified to phosphoserine; by PLK1: Ser1289, Ser1482, Ser1486, Ser1488, Ser1493, Ser1555, and Ser1563. The tract at residues 1594-1622 is disordered; sequence SDPVLDEHHQGDQDGGDQDERAEKSKLTG. A compositionally biased stretch (basic and acidic residues) spans 1598–1619; it reads LDEHHQGDQDGGDQDERAEKSK. A phosphoserine; by PLK1 mark is found at Ser1628 and Ser1635. Thr1755 carries the post-translational modification Phosphothreonine; by PLK1. The tract at residues 1777 to 1797 is disordered; sequence PSDIKNHDLSPGSRNGFKDNS. A DNA polymerase activity region spans residues 2097 to 2584; sequence AECESQKHIM…KVKIGASWGE (488 aa). Loop regions lie at residues 2142–2177 and 2257–2322; these read KLPP…GRQF and EIKM…VPFP. Mg(2+) contacts are provided by Asp2330 and Tyr2331. The loop 3 stretch occupies residues 2491–2535; the sequence is QLETFHSTFKSHGHREGMLQSDQTGLSRKRKLQGMFCPIRGGFFI. Asp2540 contributes to the Mg(2+) binding site.

This sequence belongs to the DNA polymerase type-A family. As to quaternary structure, homomultimer; forms homodimers and homotetramers. Interacts with RAD51. Interacts with ORC2 and ORC4. Interacts with RHNO1; interaction takes place during mitosis and promotes POLQ recruitment to DNA damage sites. Interacts (when phosphorylated) with TOPBP1 (via BRCT domains 7 and 8); promoting POLQ recruitment to DNA damage sites. Mg(2+) serves as cofactor. In terms of processing, phosphorylated by PLK1; promoting interaction with TOPBP1 and recruitment to DNA damage sites. In terms of tissue distribution, highly expressed in testis.

The protein localises to the nucleus. It localises to the chromosome. The enzyme catalyses DNA(n) + a 2'-deoxyribonucleoside 5'-triphosphate = DNA(n+1) + diphosphate. It catalyses the reaction ATP + H2O = ADP + phosphate + H(+). With respect to regulation, specifically inhibited by the antibiotic novobiocin. The polymerase activity is specifically inhibited by the small molecule ART558. Novobiocin and ART558 confer specific killing of BRCA1/2-deficient cells and synergize with the poly [ADP-ribose] polymerase (PARP) inhibitor olaparib. Functionally, low-fidelity DNA polymerase with a helicase activity that promotes microhomology-mediated end-joining (MMEJ), an alternative non-homologous end-joining (NHEJ) machinery required to repair double-strand breaks in DNA during mitosis. MMEJ is an error-prone repair pathway that produces deletions of sequences from the strand being repaired and promotes genomic rearrangements, such as telomere fusions, some of them leading to cellular transformation. MMEJ is required during mitosis to repair persistent double-strand breaks that originate in S-phase. Although error-prone, MMEJ protects against chromosomal instability and tumorigenesis. The polymerase acts by binding directly the 2 ends of resected double-strand breaks, allowing microhomologous sequences in the overhangs to form base pairs. It then extends each strand from the base-paired region using the opposing overhang as a template. Requires partially resected DNA containing 2 to 6 base pairs of microhomology to perform MMEJ. The polymerase lacks proofreading activity and is highly promiscuous: unlike most polymerases, promotes extension of ssDNA and partial ssDNA (pssDNA) substrates. When the ends of a break do not contain terminal microhomology must identify embedded complementary sequences through a scanning step. Also acts as a DNA helicase, promoting dissociation of the replication protein A complex (RPA/RP-A), composed of RPA1, RPA2 and RPA3, from resected double-strand breaks to allow their annealing and subsequent joining by MMEJ. Removal of RPA/RP-A complex proteins prevents RAD51 accumulation at resected ends, thereby inhibiting homology-recombination repair (HR) pathway. Also shows RNA-directed DNA polymerase activity to mediate DNA repair in vitro; however this activity needs additional evidence in vivo. May also have lyase activity. Involved in somatic hypermutation of immunoglobulin genes, a process that requires the activity of DNA polymerases to ultimately introduce mutations at both A/T and C/G base pairs. POLQ-mediated end joining activity is involved in random integration of exogenous DNA hampers. This is DNA polymerase theta from Homo sapiens (Human).